The chain runs to 23 residues: Caerin-4.1 (23 aa).

As to expression, expressed by the skin parotoid and/or rostral glands.

The protein localises to the secreted. Its function is as follows. Antibacterial peptide, that adopts an alpha helical conformation which can disrupt bacterial membranes. Each caerin displays a different antimicrobial specificity. The sequence is that of Caerin-4.1 from Ranoidea caerulea (Green tree frog).